Here is a 394-residue protein sequence, read N- to C-terminus: Elongation factor Tu (394 aa).

The 195-residue stretch at 10–204 folds into the tr-type G domain; sequence KPHINIGTIG…AVDDNIPTPE (195 aa). A G1 region spans residues 19 to 26; sequence GHVDHGKT. 19 to 26 contributes to the GTP binding site; sequence GHVDHGKT. Thr-26 serves as a coordination point for Mg(2+). The G2 stretch occupies residues 60-64; the sequence is GITIN. A G3 region spans residues 81–84; that stretch reads DCPG. Residues 81–85 and 136–139 contribute to the GTP site; these read DCPGH and NKVD. Residues 136-139 are G4; sequence NKVD. The G5 stretch occupies residues 174–176; that stretch reads SAL.

It belongs to the TRAFAC class translation factor GTPase superfamily. Classic translation factor GTPase family. EF-Tu/EF-1A subfamily. Monomer.

The protein resides in the cytoplasm. The enzyme catalyses GTP + H2O = GDP + phosphate + H(+). In terms of biological role, GTP hydrolase that promotes the GTP-dependent binding of aminoacyl-tRNA to the A-site of ribosomes during protein biosynthesis. In Chlamydia pneumoniae (Chlamydophila pneumoniae), this protein is Elongation factor Tu.